We begin with the raw amino-acid sequence, 308 residues long: GMP synthase [glutamine-hydrolyzing] subunit B (308 aa).

A GMPS ATP-PPase domain is found at methionine 1 to arginine 185. Serine 28–serine 34 contributes to the ATP binding site.

Heterodimer composed of a glutamine amidotransferase subunit (A) and a GMP-binding subunit (B).

It carries out the reaction XMP + L-glutamine + ATP + H2O = GMP + L-glutamate + AMP + diphosphate + 2 H(+). Its pathway is purine metabolism; GMP biosynthesis; GMP from XMP (L-Gln route): step 1/1. Its function is as follows. Catalyzes the synthesis of GMP from XMP. The chain is GMP synthase [glutamine-hydrolyzing] subunit B (guaAB) from Pyrococcus horikoshii (strain ATCC 700860 / DSM 12428 / JCM 9974 / NBRC 100139 / OT-3).